Here is a 320-residue protein sequence, read N- to C-terminus: Cytochrome c biogenesis protein CcsA (320 aa).

The next 8 membrane-spanning stretches (helical) occupy residues 9 to 29 (ILAH…WGTL), 36 to 56 (LSSS…GLLI), 70 to 90 (LYES…LLEV), 97 to 117 (WLGA…TLGL), 143 to 163 (ILFS…LLVI), 227 to 247 (AIGL…IWAN), 254 to 274 (WSWD…AIYL), and 288 to 308 (AIVA…VNLL).

This sequence belongs to the CcmF/CycK/Ccl1/NrfE/CcsA family. May interact with Ccs1.

It localises to the plastid. It is found in the chloroplast thylakoid membrane. Functionally, required during biogenesis of c-type cytochromes (cytochrome c6 and cytochrome f) at the step of heme attachment. The protein is Cytochrome c biogenesis protein CcsA of Pinus thunbergii (Japanese black pine).